We begin with the raw amino-acid sequence, 72 residues long: Translation initiation factor IF-1 (72 aa).

The S1-like domain occupies 1–72 (MAGNDVIEIE…TKGRITYRHK (72 aa)).

It belongs to the IF-1 family. In terms of assembly, component of the 30S ribosomal translation pre-initiation complex which assembles on the 30S ribosome in the order IF-2 and IF-3, IF-1 and N-formylmethionyl-tRNA(fMet); mRNA recruitment can occur at any time during PIC assembly.

The protein localises to the cytoplasm. Its function is as follows. One of the essential components for the initiation of protein synthesis. Stabilizes the binding of IF-2 and IF-3 on the 30S subunit to which N-formylmethionyl-tRNA(fMet) subsequently binds. Helps modulate mRNA selection, yielding the 30S pre-initiation complex (PIC). Upon addition of the 50S ribosomal subunit IF-1, IF-2 and IF-3 are released leaving the mature 70S translation initiation complex. This chain is Translation initiation factor IF-1, found in Oenococcus oeni (strain ATCC BAA-331 / PSU-1).